Here is a 528-residue protein sequence, read N- to C-terminus: Probable feruloyl esterase B-1 (528 aa).

An N-terminal signal peptide occupies residues 1–19 (MMWWFLLIGLASAAATASS). 6 cysteine pairs are disulfide-bonded: C29–C78, C64–C117, C190–C445, C259–C276, C285–C295, and C505–C527. N83 and N101 each carry an N-linked (GlcNAc...) asparagine glycan. The active-site Acyl-ester intermediate is the S191. Ca(2+)-binding residues include D260, D263, A265, D267, and I269. Residues N286, N354, and N385 are each glycosylated (N-linked (GlcNAc...) asparagine). Residues D404 and H444 each act as charge relay system in the active site.

Belongs to the tannase family.

The protein resides in the secreted. The catalysed reaction is feruloyl-polysaccharide + H2O = ferulate + polysaccharide.. Its function is as follows. Involved in degradation of plant cell walls. Hydrolyzes the feruloyl-arabinose ester bond in arabinoxylans as well as the feruloyl-galactose and feruloyl-arabinose ester bonds in pectin. The polypeptide is Probable feruloyl esterase B-1 (faeB-1) (Aspergillus fumigatus (strain ATCC MYA-4609 / CBS 101355 / FGSC A1100 / Af293) (Neosartorya fumigata)).